The primary structure comprises 104 residues: Large ribosomal subunit protein eL30 (104 aa).

Belongs to the eukaryotic ribosomal protein eL30 family.

The polypeptide is Large ribosomal subunit protein eL30 (RPL30) (Tetrahymena thermophila (strain SB210)).